Reading from the N-terminus, the 258-residue chain is Imidazole glycerol phosphate synthase subunit HisF (258 aa).

Residues Asp12 and Asp131 contribute to the active site.

The protein belongs to the HisA/HisF family. In terms of assembly, heterodimer of HisH and HisF.

It localises to the cytoplasm. It carries out the reaction 5-[(5-phospho-1-deoxy-D-ribulos-1-ylimino)methylamino]-1-(5-phospho-beta-D-ribosyl)imidazole-4-carboxamide + L-glutamine = D-erythro-1-(imidazol-4-yl)glycerol 3-phosphate + 5-amino-1-(5-phospho-beta-D-ribosyl)imidazole-4-carboxamide + L-glutamate + H(+). It participates in amino-acid biosynthesis; L-histidine biosynthesis; L-histidine from 5-phospho-alpha-D-ribose 1-diphosphate: step 5/9. IGPS catalyzes the conversion of PRFAR and glutamine to IGP, AICAR and glutamate. The HisF subunit catalyzes the cyclization activity that produces IGP and AICAR from PRFAR using the ammonia provided by the HisH subunit. The protein is Imidazole glycerol phosphate synthase subunit HisF of Nitrosomonas europaea (strain ATCC 19718 / CIP 103999 / KCTC 2705 / NBRC 14298).